A 286-amino-acid polypeptide reads, in one-letter code: Polyamine aminopropyltransferase (286 aa).

A PABS domain is found at 5 to 242 (DNWFTEVLEE…GWWSATLASK (238 aa)). S-methyl-5'-thioadenosine is bound at residue Gln35. Spermidine contacts are provided by His66 and Asp90. Residues Asp110 and 141–142 (DG) contribute to the S-methyl-5'-thioadenosine site. The active-site Proton acceptor is the Asp160. 160–163 (DSTD) lines the spermidine pocket.

Belongs to the spermidine/spermine synthase family. As to quaternary structure, homodimer or homotetramer.

It is found in the cytoplasm. The enzyme catalyses S-adenosyl 3-(methylsulfanyl)propylamine + putrescine = S-methyl-5'-thioadenosine + spermidine + H(+). Its pathway is amine and polyamine biosynthesis; spermidine biosynthesis; spermidine from putrescine: step 1/1. Catalyzes the irreversible transfer of a propylamine group from the amino donor S-adenosylmethioninamine (decarboxy-AdoMet) to putrescine (1,4-diaminobutane) to yield spermidine. This chain is Polyamine aminopropyltransferase, found in Alkalilimnicola ehrlichii (strain ATCC BAA-1101 / DSM 17681 / MLHE-1).